Consider the following 417-residue polypeptide: Serine hydroxymethyltransferase (417 aa).

(6S)-5,6,7,8-tetrahydrofolate contacts are provided by residues leucine 120 and 124–126 (GHL). Lysine 229 is subject to N6-(pyridoxal phosphate)lysine.

It belongs to the SHMT family. Homodimer. Pyridoxal 5'-phosphate is required as a cofactor.

The protein localises to the cytoplasm. The catalysed reaction is (6R)-5,10-methylene-5,6,7,8-tetrahydrofolate + glycine + H2O = (6S)-5,6,7,8-tetrahydrofolate + L-serine. It participates in one-carbon metabolism; tetrahydrofolate interconversion. The protein operates within amino-acid biosynthesis; glycine biosynthesis; glycine from L-serine: step 1/1. Functionally, catalyzes the reversible interconversion of serine and glycine with tetrahydrofolate (THF) serving as the one-carbon carrier. This reaction serves as the major source of one-carbon groups required for the biosynthesis of purines, thymidylate, methionine, and other important biomolecules. Also exhibits THF-independent aldolase activity toward beta-hydroxyamino acids, producing glycine and aldehydes, via a retro-aldol mechanism. The sequence is that of Serine hydroxymethyltransferase from Anaeromyxobacter dehalogenans (strain 2CP-C).